Here is a 318-residue protein sequence, read N- to C-terminus: Large ribosomal subunit protein uL10 (318 aa).

Residue Tyr24 is modified to Phosphotyrosine. A Phosphothreonine modification is found at Thr59. A Glycyl lysine isopeptide (Lys-Gly) (interchain with G-Cter in ubiquitin) cross-link involves residue Lys264. Residues 293–318 (TAAPAKVEAKEESEESDEDMGFGLFD) form a disordered region. Lys298 is covalently cross-linked (Glycyl lysine isopeptide (Lys-Gly) (interchain with G-Cter in SUMO1); alternate). Residue Lys298 forms a Glycyl lysine isopeptide (Lys-Gly) (interchain with G-Cter in SUMO2); alternate linkage. Over residues 303-312 (EESEESDEDM) the composition is skewed to acidic residues. Residues Ser305 and Ser308 each carry the phosphoserine modification.

This sequence belongs to the universal ribosomal protein uL10 family. As to quaternary structure, P0 forms a pentameric complex by interaction with dimers of P1 and P2. Identified in a IGF2BP1-dependent mRNP granule complex containing untranslated mRNAs. Interacts with APEX1. Interacts with FMR1. Ubiquitinated at Lys-264 by RNF14 and RNF25 in response to ribosome collisions (ribosome stalling).

The protein localises to the nucleus. Its subcellular location is the cytoplasm. Its function is as follows. Ribosomal protein P0 is the functional equivalent of E.coli protein L10. This chain is Large ribosomal subunit protein uL10 (RPLP0), found in Bos taurus (Bovine).